The following is a 44-amino-acid chain: Photosystem I reaction center subunit IX (44 aa).

A helical transmembrane segment spans residues 7 to 27 (YLSVAPVLTTLWFGSLAGLLI).

It belongs to the PsaJ family.

It is found in the plastid. It localises to the chloroplast thylakoid membrane. In terms of biological role, may help in the organization of the PsaE and PsaF subunits. This Liriodendron tulipifera (Tuliptree) protein is Photosystem I reaction center subunit IX.